The following is a 93-amino-acid chain: MATAVRAHVWVGGKVQGVYFRAATREAAQRQGVAGWVRNLPDGRVEAVFEGPPAAVQRLIDWCRQGPPAAVVEQLRVAYELPEGLTHFEVLRS.

An Acylphosphatase-like domain is found at 6–92 (RAHVWVGGKV…EGLTHFEVLR (87 aa)). Active-site residues include Arg-21 and Asn-39.

This sequence belongs to the acylphosphatase family.

It catalyses the reaction an acyl phosphate + H2O = a carboxylate + phosphate + H(+). The sequence is that of Acylphosphatase (acyP) from Gloeobacter violaceus (strain ATCC 29082 / PCC 7421).